The sequence spans 278 residues: Large ribosomal subunit protein uL2c (278 aa).

Residues 222–241 (GVVMNPNDHPHGGGEGRSPI) are disordered.

It belongs to the universal ribosomal protein uL2 family. In terms of assembly, part of the 50S ribosomal subunit.

It localises to the plastid. Its subcellular location is the chloroplast. The protein is Large ribosomal subunit protein uL2c (rpl2) of Tupiella akineta (Green alga).